A 78-amino-acid polypeptide reads, in one-letter code: UPF0349 protein YuzB (78 aa).

Belongs to the UPF0349 family.

In Bacillus subtilis (strain 168), this protein is UPF0349 protein YuzB (yuzB).